Reading from the N-terminus, the 532-residue chain is Glucose-6-phosphate isomerase (532 aa).

Glutamate 322 serves as the catalytic Proton donor. Catalysis depends on residues histidine 351 and lysine 457.

The protein belongs to the GPI family.

It is found in the cytoplasm. The catalysed reaction is alpha-D-glucose 6-phosphate = beta-D-fructose 6-phosphate. Its pathway is carbohydrate biosynthesis; gluconeogenesis. The protein operates within carbohydrate degradation; glycolysis; D-glyceraldehyde 3-phosphate and glycerone phosphate from D-glucose: step 2/4. Catalyzes the reversible isomerization of glucose-6-phosphate to fructose-6-phosphate. This is Glucose-6-phosphate isomerase from Synechococcus sp. (strain JA-3-3Ab) (Cyanobacteria bacterium Yellowstone A-Prime).